A 2169-amino-acid chain; its full sequence is MVPLVQPTTPAYRPLPSHLSADTEVRGRGTLVHEAQLNCFYISPGGSNYGSPRPAHANINANAAAGLAPEHIPTPGAALSWQAAIDAGRQAKLMGSAGNTTISTVSSTQRKRQQYGKPKKQSGTTATRPPRALLCLTLKNPIRRACISIVEWKPFEIIILLTIFANCVALAIYIPFPEDDSNATNSNLERVEYLFLIIFTVEAFLKVIAYGLLFHPNAYLRNGWNLLDFIIVVVGLFSAILEQATKADGANALGGKGAGFDVKALRAFRVLRPLRLVSGVPSLQVVLNSIIKAMVPLLHTALLVLFVIIIYAIIGLELFMGKMHKTCYNQEGITDVPAEEDPSPCALESGHGRQCQNGTVCKPGWDGPKHGITNFDNFAFAMLTVFQCITMEGWTDVLYWMQDAMGYELPWVYFVSLVIFGSFFVLNLVLGVLSGEFSKEREKAKARGDFQKLREKQQLEEDLKGYLDWITQAEDIDPENEDEGVDEEKPRNMSMPTSETESVNTENVAGGDIEGENCGARLAHRISKSKFSRYWRRWNRFCRRKCRAAVKSNVFYWLVIFLVFLNTLTIASEHYNQPHWLTEVQDTANKALLALFTAEMLLKMYSLGLQAYFVSLFNRLDCFIVCGGILETILVETKIMSPLGISVLRCVRLLRIFKITRYWNSLSNLVASLLNSVRSIASLLLLLFLFIIIFSLLGMQLFGGKFNFDEMRTRRSTFDNFPQSLLTVFQILTGEDWNSVMYDGIMAYGGPSFPGMLVCIYFIILFICGNYILLNVFLAIAVDNLADAESLTSAQKEEEEEKERKKLARTASPEKKQEVVEKPAVEETKEEKIELKSITADGESPPTTKINMDDLQPNENEDKSPYPNPDAAGEEDEEEPEMPVGPRPRPLSELHLKEKAVPMPEASAFFIFSPNNRFRLQCHRIVNDTIFTNLILFFILLSSISLAAEDPVQHTSFRNHILFYFDIVFTTIFTIEIALKMTAYGAFLHKGSFCRNYFNILDLLVVSVSLISFGIQSSAINVVKILRVLRVLRPLRAINRAKGLKHVVQCVFVAIRTIGNIVIVTTLLQFMFACIGVQLFKGKLYTCSDSSKQTEAECKGNYITYKDGEVDQPIIQPRSWENSKFDFDNVLAAMMALFTVSTFEGWPELLYRSIDSHTEDKGPIYNYRVEISIFFIIYIIIIAFFMMNIFVGFVIVTFQEQGEQEYKNCELDKNQRQCVEYALKARPLRRYIPKNQHQYKVWYVVNSTYFEYLMFVLILLNTICLAMQHYGQSCLFKIAMNILNMLFTGLFTVEMILKLIAFKPKHYFCDAWNTFDALIVVGSIVDIAITEVNPAEHTQCSPSMNAEENSRISITFFRLFRVMRLVKLLSRGEGIRTLLWTFIKSFQALPYVALLIVMLFFIYAVIGMQVFGKIALNDTTEINRNNNFQTFPQAVLLLFRCATGEAWQDIMLACMPGKKCAPESDPSNSTEGETPCGSSFAVFYFISFYMLCAFLIINLFVAVVMDNFDYLTRDWSILGPHHLDEFKRIWAEYDPEAKGRIKHLDVVTLLRRIQPPLGFGKLCPHRVACKRLVSMNMPLNSDGTAMFNATLFALVRTALRIKTEGNLEQANEELRAIIKKIWKRTSMKLLDQVVPPAGDDEVTVGKFYATFLIQEYFRKFKKRKEQGLVGKPSQRNALSLQAGLRTLHDIGPEIRRAISGDLTAEEELDKAMKEAVSAASEDDIFGRAGGLFGNHVSYYQSDSRSTFPQTFTTQRPLHINKAGNNQGDTESPSHEKLVDSTFTPSSYSSTGSNANINNANNTALGRFPHPAGYPSTVSTVEGHRPPSSPATWAQEATRKLGAMRCHSRESQIAVVCQEEPSQDKTYDVELNKDAEYCSEPSLLSTEMLSYKDDENRQLTPPEEDKGDTRPSPKKGFLRSASLGRRASFHLECLKRQKNHGGDISQKTVLPLHLVHHQALAVAGLSPLLQRSHSPTAIPRPCATPPATPGSRGWPPKPIPTLRLEGAESCEKLNSSFPSIHCSSWSEEPSPCGGGSSAARRARPVSLMVPSQAGAPGRQFHGSASSLAEAVLISEGLGQFAQDPKFIEVTTQELADACDMTIGEMENAADNILSGGAPQSPNGTLLPFVNCRDPGQDRAGGDEDEGCACALGRGWSEEELADSRVHVRSL.

Over 1–153 the chain is Cytoplasmic; the sequence is MVPLVQPTTP…RACISIVEWK (153 aa). Positions 76–97 are calmodulin-binding; sequence GAALSWQAAIDAGRQAKLMGSA. The span at 98 to 108 shows a compositional bias: polar residues; the sequence is GNTTISTVSST. The segment at 98-127 is disordered; the sequence is GNTTISTVSSTQRKRQQYGKPKKQSGTTAT. The span at 109-120 shows a compositional bias: basic residues; that stretch reads QRKRQQYGKPKK. Residues 140 to 437 form an I repeat; it reads NPIRRACISI…LVLGVLSGEF (298 aa). A helical membrane pass occupies residues 154 to 172; sequence PFEIIILLTIFANCVALAI. The Extracellular portion of the chain corresponds to 173–187; it reads YIPFPEDDSNATNSN. Asn182 carries N-linked (GlcNAc...) asparagine glycosylation. The helical transmembrane segment at 188–208 threads the bilayer; it reads LERVEYLFLIIFTVEAFLKVI. The Cytoplasmic portion of the chain corresponds to 209–217; that stretch reads AYGLLFHPN. A helical membrane pass occupies residues 218–238; the sequence is AYLRNGWNLLDFIIVVVGLFS. Residues 239 to 261 lie on the Extracellular side of the membrane; that stretch reads AILEQATKADGANALGGKGAGFD. Residues 262-280 traverse the membrane as a helical segment; the sequence is VKALRAFRVLRPLRLVSGV. Residues 281–297 lie on the Cytoplasmic side of the membrane; sequence PSLQVVLNSIIKAMVPL. Residues 298–319 form a helical membrane-spanning segment; sequence LHTALLVLFVIIIYAIIGLELF. Residues 320-379 lie on the Extracellular side of the membrane; sequence MGKMHKTCYNQEGITDVPAEEDPSPCALESGHGRQCQNGTVCKPGWDGPKHGITNFDNFA. Cysteines 345 and 361 form a disulfide. The N-linked (GlcNAc...) asparagine glycan is linked to Asn357. The segment at residues 380-401 is an intramembrane region (pore-forming); it reads FAMLTVFQCITMEGWTDVLYWM. The Selectivity filter of repeat I signature appears at 390 to 393; it reads TMEG. A Ca(2+)-binding site is contributed by Glu392. Residues 402 to 409 are Extracellular-facing; that stretch reads QDAMGYEL. Residues 410-430 form a helical membrane-spanning segment; the sequence is PWVYFVSLVIFGSFFVLNLVL. Topologically, residues 431–553 are cytoplasmic; that stretch reads GVLSGEFSKE…RKCRAAVKSN (123 aa). Residues 457–474 are AID/alpha-interaction domain; mediates interaction with the beta subunit; that stretch reads QQLEEDLKGYLDWITQAE. The interval 478–510 is disordered; sequence PENEDEGVDEEKPRNMSMPTSETESVNTENVAG. Positions 494–507 are enriched in polar residues; sequence SMPTSETESVNTEN. Ser498 is modified (phosphoserine). Thr505 bears the Phosphothreonine mark. One copy of the II repeat lies at 539-785; sequence NRFCRRKCRA…VFLAIAVDNL (247 aa). Residues 554-572 form a helical membrane-spanning segment; that stretch reads VFYWLVIFLVFLNTLTIAS. Residues 573 to 583 lie on the Extracellular side of the membrane; it reads EHYNQPHWLTE. A helical transmembrane segment spans residues 584–604; it reads VQDTANKALLALFTAEMLLKM. Residues 605 to 615 lie on the Cytoplasmic side of the membrane; sequence YSLGLQAYFVS. The chain crosses the membrane as a helical span at residues 616–635; it reads LFNRLDCFIVCGGILETILV. Over 636–644 the chain is Extracellular; the sequence is ETKIMSPLG. A helical transmembrane segment spans residues 645–663; sequence ISVLRCVRLLRIFKITRYW. Residues 664 to 682 lie on the Cytoplasmic side of the membrane; the sequence is NSLSNLVASLLNSVRSIAS. Residues 683-702 traverse the membrane as a helical segment; that stretch reads LLLLLFLFIIIFSLLGMQLF. Residues 703-722 are Extracellular-facing; the sequence is GGKFNFDEMRTRRSTFDNFP. Residues 723 to 744 constitute an intramembrane region (pore-forming); the sequence is QSLLTVFQILTGEDWNSVMYDG. A Selectivity filter of repeat II motif is present at residues 733 to 736; it reads TGED. Glu735 is a binding site for Ca(2+). Over 745–754 the chain is Extracellular; it reads IMAYGGPSFP. Residues 755–774 traverse the membrane as a helical segment; that stretch reads GMLVCIYFIILFICGNYILL. At 775-929 the chain is on the cytoplasmic side; sequence NVFLAIAVDN…LQCHRIVNDT (155 aa). The disordered stretch occupies residues 793–890; the sequence is SAQKEEEEEK…EMPVGPRPRP (98 aa). Residues 812-835 are compositionally biased toward basic and acidic residues; it reads SPEKKQEVVEKPAVEETKEEKIEL. Ser837 and Ser844 each carry phosphoserine. Residues 858–905 are interaction with STAC2; the sequence is NENEDKSPYPNPDAAGEEDEEEPEMPVGPRPRPLSELHLKEKAVPMPE. The span at 872 to 881 shows a compositional bias: acidic residues; that stretch reads AGEEDEEEPE. An III repeat occupies 916–1198; the sequence is NRFRLQCHRI…IFVGFVIVTF (283 aa). A helical membrane pass occupies residues 930–948; sequence IFTNLILFFILLSSISLAA. The Extracellular segment spans residues 949-960; sequence EDPVQHTSFRNH. The helical transmembrane segment at 961–980 threads the bilayer; that stretch reads ILFYFDIVFTTIFTIEIALK. Residues 981–996 are Cytoplasmic-facing; that stretch reads MTAYGAFLHKGSFCRN. The chain crosses the membrane as a helical span at residues 997–1015; it reads YFNILDLLVVSVSLISFGI. Residues 1016-1022 are Extracellular-facing; that stretch reads QSSAINV. Residues 1023–1041 traverse the membrane as a helical segment; that stretch reads VKILRVLRVLRPLRAINRA. Residues 1042–1060 lie on the Cytoplasmic side of the membrane; sequence KGLKHVVQCVFVAIRTIGN. A helical membrane pass occupies residues 1061–1080; sequence IVIVTTLLQFMFACIGVQLF. The Extracellular segment spans residues 1081–1130; sequence KGKLYTCSDSSKQTEAECKGNYITYKDGEVDQPIIQPRSWENSKFDFDNV. A disulfide bridge links Cys1087 with Cys1098. The segment at 1118–1207 is dihydropyridine binding; the sequence is RSWENSKFDF…FQEQGEQEYK (90 aa). An intramembrane region (pore-forming) is located at residues 1131 to 1151; that stretch reads LAAMMALFTVSTFEGWPELLY. Positions 1142–1145 match the Selectivity filter of repeat III motif; that stretch reads TFEG. Glu1144 contributes to the Ca(2+) binding site. Topologically, residues 1152 to 1168 are extracellular; sequence RSIDSHTEDKGPIYNYR. A helical membrane pass occupies residues 1169–1190; sequence VEISIFFIIYIIIIAFFMMNIF. Residues 1191–1248 lie on the Cytoplasmic side of the membrane; sequence VGFVIVTFQEQGEQEYKNCELDKNQRQCVEYALKARPLRRYIPKNQHQYKVWYVVNST. Residues 1235 to 1508 form an IV repeat; sequence NQHQYKVWYV…LFVAVVMDNF (274 aa). The chain crosses the membrane as a helical span at residues 1249–1270; it reads YFEYLMFVLILLNTICLAMQHY. The Extracellular portion of the chain corresponds to 1271-1278; sequence GQSCLFKI. The chain crosses the membrane as a helical span at residues 1279–1300; the sequence is AMNILNMLFTGLFTVEMILKLI. Residues 1301-1310 are Cytoplasmic-facing; sequence AFKPKHYFCD. The helical transmembrane segment at 1311-1330 threads the bilayer; sequence AWNTFDALIVVGSIVDIAIT. The Extracellular segment spans residues 1331 to 1353; it reads EVNPAEHTQCSPSMNAEENSRIS. A helical transmembrane segment spans residues 1354-1372; sequence ITFFRLFRVMRLVKLLSRG. Over 1373–1390 the chain is Cytoplasmic; it reads EGIRTLLWTFIKSFQALP. Residues 1391-1411 traverse the membrane as a helical segment; it reads YVALLIVMLFFIYAVIGMQVF. The Extracellular portion of the chain corresponds to 1412 to 1433; the sequence is GKIALNDTTEINRNNNFQTFPQ. Asn1417 is a glycosylation site (N-linked (GlcNAc...) asparagine). Positions 1434–1452 form an intramembrane region, pore-forming; the sequence is AVLLLFRCATGEAWQDIML. The Selectivity filter of repeat IV motif lies at 1443 to 1446; that stretch reads TGEA. The Extracellular portion of the chain corresponds to 1453-1480; that stretch reads ACMPGKKCAPESDPSNSTEGETPCGSSF. Residues 1459 to 1527 form a dihydropyridine binding region; sequence KCAPESDPSN…LGPHHLDEFK (69 aa). Cys1460 and Cys1476 are disulfide-bonded. Asn1468 is a glycosylation site (N-linked (GlcNAc...) asparagine). The phenylalkylamine binding stretch occupies residues 1473–1515; that stretch reads ETPCGSSFAVFYFISFYMLCAFLIINLFVAVVMDNFDYLTRDW. The helical transmembrane segment at 1481 to 1505 threads the bilayer; that stretch reads AVFYFISFYMLCAFLIINLFVAVVM. Residues 1506–2169 are Cytoplasmic-facing; that stretch reads DNFDYLTRDW…ADSRVHVRSL (664 aa). An important for interaction with STAC1, STAC2 and STAC3 region spans residues 1640–1667; the sequence is DEVTVGKFYATFLIQEYFRKFKKRKEQG. The interval 1646–1666 is calmodulin-binding IQ region; sequence KFYATFLIQEYFRKFKKRKEQ. The segment at 1680 to 1699 is important for localization in at the junctional membrane; sequence LQAGLRTLHDIGPEIRRAIS. A phosphoserine mark is found at Ser1699 and Ser1720. Disordered regions lie at residues 1761 to 1793 and 1894 to 1920; these read KAGN…TGSN and ENRQ…LRSA. Residues 1780 to 1792 show a composition bias toward polar residues; it reads STFTPSSYSSTGS. Positions 1894-1910 are enriched in basic and acidic residues; it reads ENRQLTPPEEDKGDTRP. At Ser1927 the chain carries Phosphoserine.

Belongs to the calcium channel alpha-1 subunit (TC 1.A.1.11) family. CACNA1C subfamily. In terms of assembly, component of a calcium channel complex consisting of a pore-forming alpha subunit (CACNA1C) and ancillary beta, gamma and delta subunits. The channel complex contains alpha, beta, gamma and delta subunits in a 1:1:1:1 ratio, i.e. it contains only one of each type of subunit. CACNA1C channel activity is modulated by ancillary subunits, such as CACNB1, CACNB2, CACNB3, CACNA2D1 and CACNA2D4. Interacts with CACNB1. Interacts with CACNB2. Identified in a complex with CACNA2D4 and CACNB3. Interacts with CACNB3. Interacts with CACNA2D1. Interacts with CACNA2D4. Interacts with the gamma subunits CACNG4, CACNG6, CACNG7 and CACNG8. Interacts with CALM1. Interacts (via the N-terminus and the C-terminal C and IQ motifs) with CABP1; this inhibits Ca(2+)-dependent channel inactivation. The binding via the C motif is calcium independent whereas the binding via IQ requires the presence of calcium and is mutually exclusive with calmodulin binding. The binding to the cytoplasmic N-terminal domain is calcium independent but is essential for the channel modulation. Interacts (via C-terminal CDB motif) with CABP5; in a calcium-dependent manner. Interacts with CIB1; the interaction increases upon cardiomyocytes hypertrophy. Interacts with STAC2 and STAC3; this inhibits channel inactivation. In terms of processing, phosphorylation by PKA at Ser-1927 activates the channel. Elevated levels of blood glucose lead to increased phosphorylation by PKA. As to expression, expressed in heart. Expressed in uterus.

The protein resides in the cell membrane. Its subcellular location is the sarcolemma. The protein localises to the perikaryon. It localises to the postsynaptic density membrane. It is found in the cell projection. The protein resides in the dendrite. Its subcellular location is the T-tubule. It catalyses the reaction Ca(2+)(in) = Ca(2+)(out). Its activity is regulated as follows. Inhibited by dihydropyridines (DHP), such as isradipine. Inhibited by nifedipine. Channel activity is regulated by Ca(2+) and calmodulin. Binding of STAC1, STAC2 or STAC3 to a region that overlaps with the calmodulin binding site inhibits channel inactivation by Ca(2+) and calmodulin. Binding of calmodulin or CABP1 at the same regulatory sites results in opposite effects on the channel function. Shear stress and pressure increases calcium channel activity. Its function is as follows. Pore-forming, alpha-1C subunit of the voltage-gated calcium channel that gives rise to L-type calcium currents. Mediates influx of calcium ions into the cytoplasm, and thereby triggers calcium release from the sarcoplasm. Plays an important role in excitation-contraction coupling in the heart. Required for normal heart development and normal regulation of heart rhythm. Required for normal contraction of smooth muscle cells in blood vessels and in the intestine. Essential for normal blood pressure regulation via its role in the contraction of arterial smooth muscle cells. Long-lasting (L-type) calcium channels belong to the 'high-voltage activated' (HVA) group. The sequence is that of Voltage-dependent L-type calcium channel subunit alpha-1C (CACNA1C) from Cavia porcellus (Guinea pig).